A 79-amino-acid polypeptide reads, in one-letter code: Alpha-elapitoxin-Aa2e (79 aa).

5 cysteine pairs are disulfide-bonded: Cys3/Cys20, Cys13/Cys41, Cys26/Cys30, Cys45/Cys56, and Cys57/Cys62.

The protein belongs to the three-finger toxin family. Long-chain subfamily. Type II alpha-neurotoxin sub-subfamily. As to expression, expressed by the venom gland.

Its subcellular location is the secreted. In terms of biological role, binds with high affinity to muscular (alpha-1/CHRNA1) and neuronal (alpha-7/CHRNA7) nicotinic acetylcholine receptor (nAChR) and inhibits acetylcholine from binding to the receptor, thereby impairing neuromuscular and neuronal transmission. Produces paralysis, clear dyspnea and lethality on mice. The chain is Alpha-elapitoxin-Aa2e from Acanthophis antarcticus (Common death adder).